We begin with the raw amino-acid sequence, 471 residues long: Cysteine--tRNA ligase (471 aa).

Cys-29 lines the Zn(2+) pocket. A 'HIGH' region motif is present at residues 31–41 (PTVYDYFHIGN). Residues Cys-212, His-237, and Glu-241 each coordinate Zn(2+). Residues 269–273 (KMSKS) carry the 'KMSKS' region motif. Lys-272 is a binding site for ATP.

It belongs to the class-I aminoacyl-tRNA synthetase family. As to quaternary structure, monomer. Zn(2+) is required as a cofactor.

The protein localises to the cytoplasm. The catalysed reaction is tRNA(Cys) + L-cysteine + ATP = L-cysteinyl-tRNA(Cys) + AMP + diphosphate. This is Cysteine--tRNA ligase from Symbiobacterium thermophilum (strain DSM 24528 / JCM 14929 / IAM 14863 / T).